A 433-amino-acid polypeptide reads, in one-letter code: Zuotin (433 aa).

Serine 50 is subject to Phosphoserine. Residues 98–170 (LYAAMGLSKL…RAQYDSCDFV (73 aa)) enclose the J domain. Basic and acidic residues predominate over residues 292-330 (EEKKEKERRKWEREAGARAEAEAKAKAEAEAKAKAESEA). Residues 292–357 (EEKKEKERRK…KAAKKKNKRA (66 aa)) form a disordered region.

As to quaternary structure, RAC is a heterodimer of the Hsp70/DnaK-type chaperone SSZ1 and the Hsp40/DnaJ-type chaperone ZUO1. RAC associates with ribosomes via ZUO1.

It is found in the cytoplasm. Its function is as follows. Component of the ribosome-associated complex (RAC), a heterodimeric chaperone complex involved in regulation of accurate translation termination and in folding or maintaining nascent polypeptides in a folding-competent state. RAC stimulates the ATPase activity of the ribosome-associated pool of Hsp70-type chaperones SSB1/SSB2 that bind to the nascent polypeptide chain. ZUO1 can act as a J-protein for SSB1/SSB2 only when associated with SSZ1. This chain is Zuotin (ZUO1), found in Saccharomyces cerevisiae (strain ATCC 204508 / S288c) (Baker's yeast).